The chain runs to 269 residues: 3-methyl-2-oxobutanoate hydroxymethyltransferase (269 aa).

Mg(2+) is bound by residues D51 and D90. 3-methyl-2-oxobutanoate contacts are provided by residues 51–52 (DS), D90, and K120. E122 contributes to the Mg(2+) binding site. Catalysis depends on E187, which acts as the Proton acceptor.

The protein belongs to the PanB family. As to quaternary structure, homodecamer; pentamer of dimers. Requires Mg(2+) as cofactor.

Its subcellular location is the cytoplasm. It catalyses the reaction 3-methyl-2-oxobutanoate + (6R)-5,10-methylene-5,6,7,8-tetrahydrofolate + H2O = 2-dehydropantoate + (6S)-5,6,7,8-tetrahydrofolate. The protein operates within cofactor biosynthesis; (R)-pantothenate biosynthesis; (R)-pantoate from 3-methyl-2-oxobutanoate: step 1/2. In terms of biological role, catalyzes the reversible reaction in which hydroxymethyl group from 5,10-methylenetetrahydrofolate is transferred onto alpha-ketoisovalerate to form ketopantoate. The chain is 3-methyl-2-oxobutanoate hydroxymethyltransferase from Tropheryma whipplei (strain TW08/27) (Whipple's bacillus).